The sequence spans 263 residues: MSEEKRKQHFVLVHGACHGAWCWYKVKPLLEALGHRVTALDLAASGIDTTRSITDISTCEQYSEPLMQLMTSLPNDEKVVLVGHSFGGLSLALAMDKFPDKISVSVFVTAFMPDTKHSPSFVEEKFASSMTPEGWMGSELETYGSDNSGLSVFFSTDFMKHRLYQLSPVEDLELGLLLKRPSSLFINELSKMENFSEKGYGSVPRAYIVCKEDNIISEDHQRWMIHNYPANLVIEMEETDHMPMFCKPQLLSDHLLAIADNFC.

S85 serves as the catalytic Acyl-ester intermediate. Catalysis depends on charge relay system residues D213 and H241.

The protein belongs to the AB hydrolase superfamily. Methylesterase family.

The catalysed reaction is methyl (indol-3-yl)acetate + H2O = (indol-3-yl)acetate + methanol + H(+). It carries out the reaction methyl (-)-jasmonate + H2O = jasmonate + methanol + H(+). It catalyses the reaction methyl salicylate + H2O = salicylate + methanol + H(+). It participates in plant hormone biosynthesis. The protein operates within lipid metabolism; oxylipin biosynthesis. Esterase activity is down-regulated by salicylic acid (SA). Down-regulated by agrochemicals Paraoxon, 3,4-DCl and Profenofos. Its function is as follows. Methylesterase shown to have carboxylesterase activity, methyl indole-3-acetic acid (MeIAA) esterase activity, methyl salicylate (MeSA) esterase activity and methyl jasmonate (MeJA) esterase activity in vitro. The sequence is that of Methylesterase 2 from Arabidopsis thaliana (Mouse-ear cress).